Here is a 447-residue protein sequence, read N- to C-terminus: MTIYHFVGIKGSGMSALAQILHDKGFQVQGSDVDKYFFTQKALEEKQIPIMTFSADNIQEGLTIIAGNAFPDTHEEIERALELGLPVIRYHKFLGQLIDGYTSIAITGSHGKTSTTGLLSHVVGAIRPTSYLIGDGTGSGTKGAEYFALEACEYQRHFLAYKPTYAIMTNIDWDHPDYFKSVDDVFNAFETLGKQVKKAVFALGDDAELRKLSLDIPIIYFGFGEENEFQAKNVIKETTGTKFDVYHRGEFLGSFEIPAYGDHNVLNALSVIALCDYEGLPVEDVKKELKTFEGVKRRFSITEKANQVLVDDYAHHPSEIRATVNAARQKYPDKKVVAVFQPHTFTRTRTFLQGFADSLNLADEVYLCDIFGSAREKTGNLTIADLAHKTKGNHIIKEEHTEELLKYPEAVILFMGAGDVQKFQAAYEKVLDHEVLTEADLKKSAIN.

Position 108–114 (108–114) interacts with ATP; the sequence is GSHGKTS.

Belongs to the MurCDEF family.

Its subcellular location is the cytoplasm. It carries out the reaction UDP-N-acetyl-alpha-D-muramate + L-alanine + ATP = UDP-N-acetyl-alpha-D-muramoyl-L-alanine + ADP + phosphate + H(+). The protein operates within cell wall biogenesis; peptidoglycan biosynthesis. Its function is as follows. Cell wall formation. The polypeptide is UDP-N-acetylmuramate--L-alanine ligase (Listeria monocytogenes serotype 4a (strain HCC23)).